Reading from the N-terminus, the 212-residue chain is Glycerol-3-phosphate acyltransferase (212 aa).

Helical transmembrane passes span 3 to 23 (IIIMIIIAYLLGSIQTGLWIG), 70 to 90 (IPIILGITTVSPFFIGFFAII), 110 to 130 (AGVLLGFAPSFFLYLLVIFLL), 143 to 163 (ITVAVVGILSVLIFPLVGFIL), and 164 to 184 (TDYDWIFTTVVILMALTIIIR).

This sequence belongs to the PlsY family. In terms of assembly, probably interacts with PlsX.

The protein resides in the cell membrane. The enzyme catalyses an acyl phosphate + sn-glycerol 3-phosphate = a 1-acyl-sn-glycero-3-phosphate + phosphate. The protein operates within lipid metabolism; phospholipid metabolism. Its function is as follows. Catalyzes the transfer of an acyl group from acyl-phosphate (acyl-PO(4)) to glycerol-3-phosphate (G3P) to form lysophosphatidic acid (LPA). This enzyme utilizes acyl-phosphate as fatty acyl donor, but not acyl-CoA or acyl-ACP. In Streptococcus agalactiae serotype III (strain NEM316), this protein is Glycerol-3-phosphate acyltransferase.